The sequence spans 38 residues: Cytochrome b6-f complex subunit 5 (38 aa).

Residues 5–25 traverse the membrane as a helical segment; sequence LVLGLVMGLVPITLAGLFVAA.

Belongs to the PetG family. The 4 large subunits of the cytochrome b6-f complex are cytochrome b6, subunit IV (17 kDa polypeptide, PetD), cytochrome f and the Rieske protein, while the 4 small subunits are PetG, PetL, PetM and PetN. The complex functions as a dimer.

The protein resides in the cellular thylakoid membrane. In terms of biological role, component of the cytochrome b6-f complex, which mediates electron transfer between photosystem II (PSII) and photosystem I (PSI), cyclic electron flow around PSI, and state transitions. PetG is required for either the stability or assembly of the cytochrome b6-f complex. The protein is Cytochrome b6-f complex subunit 5 of Gloeothece citriformis (strain PCC 7424) (Cyanothece sp. (strain PCC 7424)).